The chain runs to 270 residues: Fibroblast growth factor 5 (270 aa).

An N-terminal signal peptide occupies residues 1 to 20 (MSLSFLLLLFLSHLILSAWA). Residues 25–86 (RLAPKGQPGP…EQSSFQWSPS (62 aa)) are disordered. Positions 41–69 (PGGASSRRSSSSTATSSSSPASSSSAASR) are enriched in low complexity. Polar residues predominate over residues 76 to 86 (LEQSSFQWSPS). Residue asparagine 112 is glycosylated (N-linked (GlcNAc...) asparagine). The disordered stretch occupies residues 237–257 (EKKKPPNPVKPKVPLSAPRRS).

This sequence belongs to the heparin-binding growth factors family. Interacts with FGFR1 and FGFR2. Affinity between fibroblast growth factors (FGFs) and their receptors is increased by heparan sulfate glycosaminoglycans that function as coreceptors.

It localises to the secreted. In terms of biological role, plays an important role in the regulation of cell proliferation and cell differentiation. Required for normal regulation of the hair growth cycle. Functions as an inhibitor of hair elongation by promoting progression from anagen, the growth phase of the hair follicle, into catagen the apoptosis-induced regression phase. The polypeptide is Fibroblast growth factor 5 (FGF5) (Bos taurus (Bovine)).